A 626-amino-acid polypeptide reads, in one-letter code: Receptor-like protein 4 (626 aa).

An N-terminal signal peptide occupies residues 1–22 (MMLRFILASLLLSSFSLYSSLA). Over 23–549 (RPAPYALRIS…CGPHLSSGAK (527 aa)) the chain is Extracellular. N-linked (GlcNAc...) asparagine glycosylation is found at Asn61, Asn282, Asn333, and Asn417. LRR repeat units lie at residues 420–444 (RWFI…ISKL), 445–468 (KHLQ…LGSV), 470–492 (SLEV…LGEL), and 493–516 (TSLR…VGGR). 2 N-linked (GlcNAc...) asparagine glycosylation sites follow: Asn451 and Asn482. Asn524 carries N-linked (GlcNAc...) asparagine glycosylation. Residues 550–570 (IGIAFGVSLAFLLIVACAMIW) form a helical membrane-spanning segment. At 571 to 626 (WKRRQNILRAQQIAARGAPYAKKRTHVSHDIQMSRHGHNNHGQARTAVENGPSLLS) the chain is on the cytoplasmic side. Residues 603–626 (MSRHGHNNHGQARTAVENGPSLLS) form a disordered region.

The protein belongs to the RLP family.

The protein localises to the cell membrane. The polypeptide is Receptor-like protein 4 (Arabidopsis thaliana (Mouse-ear cress)).